The following is a 635-amino-acid chain: DNA topoisomerase 4 subunit B (635 aa).

ATP-binding positions include tyrosine 5, asparagine 45, aspartate 72, glycine 113–alanine 119, and lysine 340. The region spanning arginine 422–proline 537 is the Toprim domain. Mg(2+) is bound by residues glutamate 428, aspartate 502, and aspartate 504.

This sequence belongs to the type II topoisomerase family. ParE type 2 subfamily. Heterotetramer composed of ParC and ParE. Mg(2+) serves as cofactor. Mn(2+) is required as a cofactor. The cofactor is Ca(2+).

The catalysed reaction is ATP-dependent breakage, passage and rejoining of double-stranded DNA.. Functionally, topoisomerase IV is essential for chromosome segregation. It relaxes supercoiled DNA. Performs the decatenation events required during the replication of a circular DNA molecule. The protein is DNA topoisomerase 4 subunit B of Mycoplasma pneumoniae (strain ATCC 29342 / M129 / Subtype 1) (Mycoplasmoides pneumoniae).